The following is a 410-amino-acid chain: DNA replication and repair protein RecF (410 aa).

30–37 (GPNGHGKT) is an ATP binding site.

The protein belongs to the RecF family.

It localises to the cytoplasm. Functionally, the RecF protein is involved in DNA metabolism; it is required for DNA replication and normal SOS inducibility. RecF binds preferentially to single-stranded, linear DNA. It also seems to bind ATP. The chain is DNA replication and repair protein RecF from Rhodococcus opacus (strain B4).